Here is a 799-residue protein sequence, read N- to C-terminus: Phenylalanine--tRNA ligase beta subunit (799 aa).

A tRNA-binding domain is found at 40–147; the sequence is KSHLSSVITV…KDTTLGISVR (108 aa). In terms of domain architecture, B5 spans 402-479; the sequence is SKTVTIETNL…RTIGYASIRT (78 aa). Residues Asp457, Asp463, Glu466, and Glu467 each contribute to the Mg(2+) site. The 93-residue stretch at 707-799 folds into the FDX-ACB domain; sequence SHFPQGQLDL…TAKSNGYSLR (93 aa).

Belongs to the phenylalanyl-tRNA synthetase beta subunit family. Type 1 subfamily. Tetramer of two alpha and two beta subunits. Requires Mg(2+) as cofactor.

It localises to the cytoplasm. The enzyme catalyses tRNA(Phe) + L-phenylalanine + ATP = L-phenylalanyl-tRNA(Phe) + AMP + diphosphate + H(+). The polypeptide is Phenylalanine--tRNA ligase beta subunit (Leptospira biflexa serovar Patoc (strain Patoc 1 / Ames)).